Consider the following 195-residue polypeptide: Dephospho-CoA kinase (195 aa).

The DPCK domain occupies 3 to 195 (IVGLTGGIGS…IALHENYLNH (193 aa)). 11–16 (GSGKSA) contacts ATP.

The protein belongs to the CoaE family.

The protein resides in the cytoplasm. It carries out the reaction 3'-dephospho-CoA + ATP = ADP + CoA + H(+). It functions in the pathway cofactor biosynthesis; coenzyme A biosynthesis; CoA from (R)-pantothenate: step 5/5. In terms of biological role, catalyzes the phosphorylation of the 3'-hydroxyl group of dephosphocoenzyme A to form coenzyme A. The protein is Dephospho-CoA kinase of Acinetobacter baylyi (strain ATCC 33305 / BD413 / ADP1).